The following is a 236-amino-acid chain: 15,16-dihydrobiliverdin:ferredoxin oxidoreductase (236 aa).

The protein belongs to the HY2 family.

It catalyses the reaction 15,16-dihydrobiliverdin + oxidized 2[4Fe-4S]-[ferredoxin] = biliverdin IXalpha + reduced 2[4Fe-4S]-[ferredoxin] + 2 H(+). Catalyzes the two-electron reduction of biliverdin IX-alpha at the C15 methine bridge. The sequence is that of 15,16-dihydrobiliverdin:ferredoxin oxidoreductase (pebA) from Synechococcus sp. (strain WH8020).